A 279-amino-acid chain; its full sequence is Movement protein (279 aa).

Positions 255-279 (SPPFAIGSPSASRNNSFRSQVVNGL) are disordered. Polar residues predominate over residues 263 to 279 (PSASRNNSFRSQVVNGL).

It belongs to the cucumovirus movement protein family.

The protein localises to the host cell junction. Its subcellular location is the host plasmodesma. Transports viral genome to neighboring plant cells directly through plasmosdesmata, without any budding. The movement protein allows efficient cell to cell propagation, by bypassing the host cell wall barrier. Acts by forming a tubular structure at the host plasmodesmata, enlarging it enough to allow free passage of virion capsids. The polypeptide is Movement protein (Cucumis sativus (Cucumber)).